The primary structure comprises 277 residues: Proteasome subunit beta type-7 (277 aa).

The propeptide at 1–43 is removed in mature form; that stretch reads MAAVSVFQPPVGGFSFDNCRRNAVLEADFAKKGFKLPKARKTG. T44 acts as the Nucleophile in catalysis.

Belongs to the peptidase T1B family. The 26S proteasome consists of a 20S proteasome core and two 19S regulatory subunits. The 20S proteasome core is a barrel-shaped complex made of 28 subunits that are arranged in four stacked rings. The two outer rings are each formed by seven alpha subunits, and the two inner rings are formed by seven beta subunits. The proteolytic activity is exerted by three beta-subunits PSMB5, PSMB6 and PSMB7.

The protein localises to the cytoplasm. It localises to the nucleus. It carries out the reaction Cleavage of peptide bonds with very broad specificity.. Its function is as follows. Component of the 20S core proteasome complex involved in the proteolytic degradation of most intracellular proteins. This complex plays numerous essential roles within the cell by associating with different regulatory particles. Associated with two 19S regulatory particles, forms the 26S proteasome and thus participates in the ATP-dependent degradation of ubiquitinated proteins. The 26S proteasome plays a key role in the maintenance of protein homeostasis by removing misfolded or damaged proteins that could impair cellular functions, and by removing proteins whose functions are no longer required. Associated with the PA200 or PA28, the 20S proteasome mediates ubiquitin-independent protein degradation. This type of proteolysis is required in several pathways including spermatogenesis (20S-PA200 complex) or generation of a subset of MHC class I-presented antigenic peptides (20S-PA28 complex). Within the 20S core complex, PSMB7 displays a trypsin-like activity. The chain is Proteasome subunit beta type-7 (Psmb7) from Mus musculus (Mouse).